The primary structure comprises 218 residues: Deoxyribose-phosphate aldolase (218 aa).

The active-site Proton donor/acceptor is the Asp-92. Catalysis depends on Lys-155, which acts as the Schiff-base intermediate with acetaldehyde. The active-site Proton donor/acceptor is the Lys-184.

This sequence belongs to the DeoC/FbaB aldolase family. DeoC type 1 subfamily.

It localises to the cytoplasm. The catalysed reaction is 2-deoxy-D-ribose 5-phosphate = D-glyceraldehyde 3-phosphate + acetaldehyde. Its pathway is carbohydrate degradation; 2-deoxy-D-ribose 1-phosphate degradation; D-glyceraldehyde 3-phosphate and acetaldehyde from 2-deoxy-alpha-D-ribose 1-phosphate: step 2/2. Functionally, catalyzes a reversible aldol reaction between acetaldehyde and D-glyceraldehyde 3-phosphate to generate 2-deoxy-D-ribose 5-phosphate. The protein is Deoxyribose-phosphate aldolase of Clostridium kluyveri (strain NBRC 12016).